Here is a 141-residue protein sequence, read N- to C-terminus: S-adenosylmethionine decarboxylase proenzyme (141 aa).

Ser-63 functions as the Schiff-base intermediate with substrate; via pyruvic acid in the catalytic mechanism. Ser-63 is subject to Pyruvic acid (Ser); by autocatalysis. The Proton acceptor; for processing activity role is filled by His-68. Cys-83 functions as the Proton donor; for catalytic activity in the catalytic mechanism.

Belongs to the prokaryotic AdoMetDC family. Type 1 subfamily. Heterotetramer of two alpha and two beta chains arranged as a dimer of alpha/beta heterodimers. Pyruvate is required as a cofactor. In terms of processing, is synthesized initially as an inactive proenzyme. Formation of the active enzyme involves a self-maturation process in which the active site pyruvoyl group is generated from an internal serine residue via an autocatalytic post-translational modification. Two non-identical subunits are generated from the proenzyme in this reaction, and the pyruvate is formed at the N-terminus of the alpha chain, which is derived from the carboxyl end of the proenzyme. The post-translation cleavage follows an unusual pathway, termed non-hydrolytic serinolysis, in which the side chain hydroxyl group of the serine supplies its oxygen atom to form the C-terminus of the beta chain, while the remainder of the serine residue undergoes an oxidative deamination to produce ammonia and the pyruvoyl group blocking the N-terminus of the alpha chain.

It carries out the reaction S-adenosyl-L-methionine + H(+) = S-adenosyl 3-(methylsulfanyl)propylamine + CO2. Its pathway is amine and polyamine biosynthesis; S-adenosylmethioninamine biosynthesis; S-adenosylmethioninamine from S-adenosyl-L-methionine: step 1/1. In terms of biological role, catalyzes the decarboxylation of S-adenosylmethionine to S-adenosylmethioninamine (dcAdoMet), the propylamine donor required for the synthesis of the polyamines spermine and spermidine from the diamine putrescine. This is S-adenosylmethionine decarboxylase proenzyme from Thermococcus onnurineus (strain NA1).